The chain runs to 287 residues: Pantothenate synthetase (287 aa).

ATP is bound at residue 37–44 (MGALHEGH). His44 acts as the Proton donor in catalysis. Residue Gln68 participates in (R)-pantoate binding. Gln68 contributes to the beta-alanine binding site. 154–157 (GQKD) serves as a coordination point for ATP. Position 160 (Gln160) interacts with (R)-pantoate. ATP-binding positions include Val183 and 191–194 (LSSR).

The protein belongs to the pantothenate synthetase family. Homodimer.

Its subcellular location is the cytoplasm. It catalyses the reaction (R)-pantoate + beta-alanine + ATP = (R)-pantothenate + AMP + diphosphate + H(+). It functions in the pathway cofactor biosynthesis; (R)-pantothenate biosynthesis; (R)-pantothenate from (R)-pantoate and beta-alanine: step 1/1. Functionally, catalyzes the condensation of pantoate with beta-alanine in an ATP-dependent reaction via a pantoyl-adenylate intermediate. In Leifsonia xyli subsp. xyli (strain CTCB07), this protein is Pantothenate synthetase.